Reading from the N-terminus, the 377-residue chain is SH2/SH3 adapter protein Nck1 (377 aa).

Ala2 is modified (N-acetylalanine). The SH3 1 domain maps to 2-61 (AEEVVVVAKFDYVAQQEQELDIKKNERLWLLDDSKSWWRVRNSMNKTGFVPSNYVERKNS). Residues Ser85, Ser91, and Ser96 each carry the phosphoserine modification. Tyr105 bears the Phosphotyrosine mark. The 60-residue stretch at 106–165 (DLNMPAFVKFNYMAEREDELSLIKGTKVIVMEKCSDGWWRGSYNGQIGWFPSNYVTEEGD) folds into the SH3 2 domain. Ser166 carries the post-translational modification Phosphoserine. In terms of domain architecture, SH3 3 spans 190–252 (QVLHVVQALY…PKNYVTIMQN (63 aa)). An SH2 domain is found at 282 to 376 (WYYGKVTRHQ…GEKLYLVKHL (95 aa)).

In terms of assembly, interacts (via SH2 domain and SH3 domain 2) with EGFR. Interacts with PAK1 and SOS1. Interacts (via SH3 domains) with PKN2. Associates with BLNK, PLCG1, VAV1 and NCK1 in a B-cell antigen receptor-dependent fashion. Interacts with SOCS7. This interaction is required for nuclear import. Part of a complex containing PPP1R15B, PP1 and NCK1. Interacts with RALGPS1. Interacts with CAV2 (tyrosine phosphorylated form). Interacts with ADAM15. Interacts with FASLG. Directly interacts with RASA1. Interacts with isoform 4 of MINK1. Interacts with FLT1 (tyrosine phosphorylated). Interacts with KDR (tyrosine phosphorylated). Interacts (via SH2 domain) with EPHB1; activates the JUN cascade to regulate cell adhesion. Interacts with EPHA2. Interacts (via SH2 domain) with PDGFRB (tyrosine phosphorylated). Interacts with the inactive form of EIF2AK2/PKR. Interacts with PTPN1. Interacts with INSR/insulin receptor (in response to insulin stimulation); this interaction may mediate PTPN1 recruitment leading to INSR dephosphorylation. Interacts with CD3E (via Proline-rich sequence); the interaction is ligand dependent but independent of tyrosine kinase activation. Interacts with EGFR. Interacts with IRS1. In terms of processing, phosphorylated on Ser and Tyr residues. Phosphorylated in response to activation of EGFR and FcERI. Phosphorylated by activated PDGFRB.

It is found in the cytoplasm. The protein localises to the endoplasmic reticulum. The protein resides in the nucleus. In terms of biological role, adapter protein which associates with tyrosine-phosphorylated growth factor receptors, such as KDR and PDGFRB, or their cellular substrates. Maintains low levels of EIF2S1 phosphorylation by promoting its dephosphorylation by PP1. Plays a role in the DNA damage response, not in the detection of the damage by ATM/ATR, but for efficient activation of downstream effectors, such as that of CHEK2. Plays a role in ELK1-dependent transcriptional activation in response to activated Ras signaling. Modulates the activation of EIF2AK2/PKR by dsRNA. May play a role in cell adhesion and migration through interaction with ephrin receptors. Also acts as an adpater protein for the T cell receptor complex (TCR-CD3E). Upon ligand engagement, is recruited by CD3E and promotes maturation of the immune synapse and T cell activation. This Mus musculus (Mouse) protein is SH2/SH3 adapter protein Nck1 (Nck1).